Here is a 347-residue protein sequence, read N- to C-terminus: Probable ribonucleotide transport ATP-binding protein mkl (347 aa).

Residues 16 to 252 (IEVKGLTKSF…DEPVVRQFLN (237 aa)) enclose the ABC transporter domain. 48 to 55 (GPSGTGKS) contributes to the ATP binding site.

Belongs to the ABC transporter superfamily.

Not known, could be involved in the transport of ribonucleotides. The chain is Probable ribonucleotide transport ATP-binding protein mkl (mkl) from Mycobacterium leprae (strain TN).